Here is an 898-residue protein sequence, read N- to C-terminus: Alanine--tRNA ligase (898 aa).

Residues His589, His593, Cys693, and His697 each coordinate Zn(2+).

Belongs to the class-II aminoacyl-tRNA synthetase family. The cofactor is Zn(2+).

It is found in the cytoplasm. The catalysed reaction is tRNA(Ala) + L-alanine + ATP = L-alanyl-tRNA(Ala) + AMP + diphosphate. Catalyzes the attachment of alanine to tRNA(Ala) in a two-step reaction: alanine is first activated by ATP to form Ala-AMP and then transferred to the acceptor end of tRNA(Ala). Also edits incorrectly charged Ser-tRNA(Ala) and Gly-tRNA(Ala) via its editing domain. This chain is Alanine--tRNA ligase, found in Methanothermobacter thermautotrophicus (strain ATCC 29096 / DSM 1053 / JCM 10044 / NBRC 100330 / Delta H) (Methanobacterium thermoautotrophicum).